A 238-amino-acid chain; its full sequence is MLFPTPLISGRLERRYKRFLADVTLDDGRFITASVPNTGSMLGLTAPGSRVWLSFSDAPHRKYAHTLQIVEADNTLVGVNTGLPNRIAEEAILKGLIPDLDGYATLKREQKYGRNSRIDLLLDDGPRPRAYVEVKNVHFIRTPGLAEFPDTVTARGAKHLDELVDVVAAGHRGIMLFITQRADCSRFGISGDLDPFYARAFERAIASGVEAWAVRCHITENGIDATELVPIEDMRRIE.

The protein belongs to the SfsA family.

The sequence is that of Sugar fermentation stimulation protein homolog from Brucella melitensis biotype 1 (strain ATCC 23456 / CCUG 17765 / NCTC 10094 / 16M).